The sequence spans 241 residues: Guanosine phosphorylase (241 aa).

The protein belongs to the PNP/UDP phosphorylase family.

The enzyme catalyses guanosine + phosphate = alpha-D-ribose 1-phosphate + guanine. The catalysed reaction is a purine D-ribonucleoside + phosphate = a purine nucleobase + alpha-D-ribose 1-phosphate. It carries out the reaction inosine + phosphate = alpha-D-ribose 1-phosphate + hypoxanthine. It catalyses the reaction adenosine + phosphate = alpha-D-ribose 1-phosphate + adenine. Its activity is regulated as follows. Activity is higher at low KCl concentrations. In terms of biological role, phosphorylase involved in the non-carboxylating pentose bisphosphate pathway, a nucleoside degradation pathway present in some halophilic archaea. Catalyzes the phosphorolytic cleavage of guanosine to guanine and ribose-1-phosphate (R1P). Exhibits the highest activity toward guanosine, but also shows lower activity against inosine and adenosine. The polypeptide is Guanosine phosphorylase (Halorubrum lacusprofundi (strain ATCC 49239 / DSM 5036 / JCM 8891 / ACAM 34)).